A 146-amino-acid polypeptide reads, in one-letter code: Anti-sigma F factor (146 aa).

This sequence belongs to the anti-sigma-factor family.

The enzyme catalyses L-seryl-[protein] + ATP = O-phospho-L-seryl-[protein] + ADP + H(+). It carries out the reaction L-threonyl-[protein] + ATP = O-phospho-L-threonyl-[protein] + ADP + H(+). Functionally, binds to sigma F and blocks its ability to form an RNA polymerase holoenzyme (E-sigma F). Phosphorylates SpoIIAA on a serine residue. This phosphorylation may enable SpoIIAA to act as an anti-anti-sigma factor that counteracts SpoIIAB and thus releases sigma F from inhibition. In Lysinibacillus sphaericus (Bacillus sphaericus), this protein is Anti-sigma F factor.